Consider the following 1297-residue polypeptide: Phosphoribosylformylglycinamidine synthase (1297 aa).

ATP contacts are provided by residues 307–318 (GASTGSGGEIRD) and alanine 678. Mg(2+) is bound by residues glutamate 718, asparagine 722, and aspartate 886. The 254-residue stretch at 1044–1297 (MAILREQGVN…MFQNARKYFG (254 aa)) folds into the Glutamine amidotransferase type-1 domain. Residue cysteine 1137 is the Nucleophile of the active site. Catalysis depends on residues histidine 1262 and glutamate 1264.

It in the N-terminal section; belongs to the FGAMS family. As to quaternary structure, monomer.

The protein localises to the cytoplasm. It catalyses the reaction N(2)-formyl-N(1)-(5-phospho-beta-D-ribosyl)glycinamide + L-glutamine + ATP + H2O = 2-formamido-N(1)-(5-O-phospho-beta-D-ribosyl)acetamidine + L-glutamate + ADP + phosphate + H(+). It participates in purine metabolism; IMP biosynthesis via de novo pathway; 5-amino-1-(5-phospho-D-ribosyl)imidazole from N(2)-formyl-N(1)-(5-phospho-D-ribosyl)glycinamide: step 1/2. Its function is as follows. Phosphoribosylformylglycinamidine synthase involved in the purines biosynthetic pathway. Catalyzes the ATP-dependent conversion of formylglycinamide ribonucleotide (FGAR) and glutamine to yield formylglycinamidine ribonucleotide (FGAM) and glutamate. In Vibrio cholerae serotype O1 (strain ATCC 39315 / El Tor Inaba N16961), this protein is Phosphoribosylformylglycinamidine synthase.